The primary structure comprises 378 residues: Queuine tRNA-ribosyltransferase (378 aa).

Residue D90 is the Proton acceptor of the active site. Substrate-binding positions include 90 to 94 (DSGGF), D144, Q188, and G220. The segment at 251–257 (GVGTPED) is RNA binding. D270 (nucleophile) is an active-site residue. Residues 275 to 279 (TRNAR) form an RNA binding; important for wobble base 34 recognition region. Residues C308, C310, C313, and H339 each coordinate Zn(2+).

This sequence belongs to the queuine tRNA-ribosyltransferase family. In terms of assembly, homodimer. Within each dimer, one monomer is responsible for RNA recognition and catalysis, while the other monomer binds to the replacement base PreQ1. Requires Zn(2+) as cofactor.

The catalysed reaction is 7-aminomethyl-7-carbaguanine + guanosine(34) in tRNA = 7-aminomethyl-7-carbaguanosine(34) in tRNA + guanine. The protein operates within tRNA modification; tRNA-queuosine biosynthesis. Its function is as follows. Catalyzes the base-exchange of a guanine (G) residue with the queuine precursor 7-aminomethyl-7-deazaguanine (PreQ1) at position 34 (anticodon wobble position) in tRNAs with GU(N) anticodons (tRNA-Asp, -Asn, -His and -Tyr). Catalysis occurs through a double-displacement mechanism. The nucleophile active site attacks the C1' of nucleotide 34 to detach the guanine base from the RNA, forming a covalent enzyme-RNA intermediate. The proton acceptor active site deprotonates the incoming PreQ1, allowing a nucleophilic attack on the C1' of the ribose to form the product. After dissociation, two additional enzymatic reactions on the tRNA convert PreQ1 to queuine (Q), resulting in the hypermodified nucleoside queuosine (7-(((4,5-cis-dihydroxy-2-cyclopenten-1-yl)amino)methyl)-7-deazaguanosine). This is Queuine tRNA-ribosyltransferase from Nautilia profundicola (strain ATCC BAA-1463 / DSM 18972 / AmH).